The primary structure comprises 168 residues: 6-pyruvoyl tetrahydrobiopterin synthase (168 aa).

His19 serves as a coordination point for Zn(2+). Cys38 acts as the Proton acceptor in catalysis. Residues His44 and His46 each coordinate Zn(2+). Active-site charge relay system residues include His85 and Glu130. Ser159 bears the Phosphoserine mark. Thr161 carries the phosphothreonine modification. Ser164, Ser165, and Ser167 each carry phosphoserine.

This sequence belongs to the PTPS family. Homohexamer formed of two homotrimers in a head to head fashion. It depends on Zn(2+) as a cofactor.

The enzyme catalyses 7,8-dihydroneopterin 3'-triphosphate = 6-pyruvoyl-5,6,7,8-tetrahydropterin + triphosphate + H(+). It participates in cofactor biosynthesis; tetrahydrobiopterin biosynthesis; tetrahydrobiopterin from 7,8-dihydroneopterin triphosphate: step 1/3. In terms of biological role, required for pigment and biopterin synthesis. The sequence is that of 6-pyruvoyl tetrahydrobiopterin synthase (pr) from Drosophila melanogaster (Fruit fly).